The following is a 520-amino-acid chain: Amine oxidase [flavin-containing] B (520 aa).

N-acetylserine is present on serine 2. Residues 2-489 (SSKCDVVVVG…TFLERHLPSV (488 aa)) are Cytoplasmic-facing. Lysine 52 bears the N6-acetyllysine mark. Cysteine 397 is subject to S-8alpha-FAD cysteine. The chain crosses the membrane as a helical; Anchor for type IV membrane protein span at residues 490 to 516 (PGLLRLIGLTAIFSATALGYLAHKRGL). The Mitochondrial intermembrane portion of the chain corresponds to 517–520 (LVRV).

The protein belongs to the flavin monoamine oxidase family. In terms of assembly, monomer, homo- or heterodimer (containing two subunits of similar size). Each subunit contains a covalently bound flavin. Enzymatically active as monomer. FAD serves as cofactor.

The protein localises to the mitochondrion outer membrane. The catalysed reaction is a secondary aliphatic amine + O2 + H2O = a primary amine + an aldehyde + H2O2. It catalyses the reaction (R)-adrenaline + O2 + H2O = (R)-3,4-dihydroxymandelaldehyde + methylamine + H2O2. It carries out the reaction a primary methyl amine + O2 + H2O = an aldehyde + H2O2 + NH4(+). The enzyme catalyses benzylamine + O2 + H2O = benzaldehyde + H2O2 + NH4(+). The catalysed reaction is dopamine + O2 + H2O = 3,4-dihydroxyphenylacetaldehyde + H2O2 + NH4(+). It catalyses the reaction tyramine + O2 + H2O = (4-hydroxyphenyl)acetaldehyde + H2O2 + NH4(+). It carries out the reaction (R)-noradrenaline + O2 + H2O = (R)-3,4-dihydroxymandelaldehyde + H2O2 + NH4(+). The enzyme catalyses 2-phenylethylamine + O2 + H2O = 2-phenylacetaldehyde + H2O2 + NH4(+). The catalysed reaction is N-acetylputrescine + O2 + H2O = 4-acetamidobutanal + H2O2 + NH4(+). In terms of biological role, catalyzes the oxidative deamination of primary and some secondary amines such as neurotransmitters, and exogenous amines including the tertiary amine, neurotoxin 1-methyl-4-phenyl-1,2,3,6-tetrahydropyridine (MPTP), with concomitant reduction of oxygen to hydrogen peroxide and participates in the metabolism of neuroactive and vasoactive amines in the central nervous system and peripheral tissues. Preferentially degrades benzylamine and phenylethylamine. The sequence is that of Amine oxidase [flavin-containing] B from Sus scrofa (Pig).